Reading from the N-terminus, the 127-residue chain is Large ribosomal subunit protein eL8 (127 aa).

This sequence belongs to the eukaryotic ribosomal protein eL8 family. Part of the 50S ribosomal subunit. Probably part of the RNase P complex.

Its subcellular location is the cytoplasm. Functionally, multifunctional RNA-binding protein that recognizes the K-turn motif in ribosomal RNA, the RNA component of RNase P, box H/ACA, box C/D and box C'/D' sRNAs. This chain is Large ribosomal subunit protein eL8, found in Aeropyrum pernix (strain ATCC 700893 / DSM 11879 / JCM 9820 / NBRC 100138 / K1).